The chain runs to 143 residues: Transcriptional regulator MraZ (143 aa).

SpoVT-AbrB domains lie at 5–47 (EYSH…PMAV) and 76–119 (ALEA…SAEN).

It belongs to the MraZ family. Forms oligomers.

It is found in the cytoplasm. Its subcellular location is the nucleoid. This Leuconostoc mesenteroides subsp. mesenteroides (strain ATCC 8293 / DSM 20343 / BCRC 11652 / CCM 1803 / JCM 6124 / NCDO 523 / NBRC 100496 / NCIMB 8023 / NCTC 12954 / NRRL B-1118 / 37Y) protein is Transcriptional regulator MraZ.